We begin with the raw amino-acid sequence, 251 residues long: tRNA (guanine-N(1)-)-methyltransferase (251 aa).

S-adenosyl-L-methionine is bound by residues glycine 117 and 137–142 (IGDYVL).

It belongs to the RNA methyltransferase TrmD family. In terms of assembly, homodimer.

Its subcellular location is the cytoplasm. The catalysed reaction is guanosine(37) in tRNA + S-adenosyl-L-methionine = N(1)-methylguanosine(37) in tRNA + S-adenosyl-L-homocysteine + H(+). Functionally, specifically methylates guanosine-37 in various tRNAs. This is tRNA (guanine-N(1)-)-methyltransferase from Haemophilus ducreyi (strain 35000HP / ATCC 700724).